Consider the following 419-residue polypeptide: L-rhamnose isomerase (419 aa).

His-262, Asp-294, and Asp-296 together coordinate Mn(2+).

This sequence belongs to the rhamnose isomerase family. As to quaternary structure, homotetramer. Requires Mn(2+) as cofactor.

It is found in the cytoplasm. It catalyses the reaction L-rhamnopyranose = L-rhamnulose. Its pathway is carbohydrate degradation; L-rhamnose degradation; glycerone phosphate from L-rhamnose: step 1/3. Functionally, catalyzes the interconversion of L-rhamnose and L-rhamnulose. The protein is L-rhamnose isomerase of Escherichia coli O45:K1 (strain S88 / ExPEC).